The chain runs to 317 residues: Lipase 1 (317 aa).

A signal peptide spans 1-18 (MLLKRLCFAALFSLSMVG). Cys-19 carries N-palmitoyl cysteine lipidation. Cys-19 carries S-diacylglycerol cysteine lipidation. In terms of domain architecture, AB hydrolase-1 spans 69–296 (PLLLIHGFGG…MEDVGHVPMV (228 aa)). The active site involves His-74. The active-site Nucleophile is the Ser-142. Residues Glu-270 and His-292 each act as charge relay system in the active site.

The protein resides in the cell outer membrane. It carries out the reaction a triacylglycerol + H2O = a diacylglycerol + a fatty acid + H(+). The polypeptide is Lipase 1 (lip1) (Psychrobacter immobilis).